The following is a 267-amino-acid chain: Thiamine pyrophosphokinase 3 (267 aa).

Belongs to the thiamine pyrophosphokinase family.

Its subcellular location is the cytoplasm. The protein localises to the cytosol. It catalyses the reaction thiamine + ATP = thiamine diphosphate + AMP + H(+). The protein operates within cofactor biosynthesis; thiamine diphosphate biosynthesis; thiamine diphosphate from thiamine: step 1/1. Functionally, catalyzes the phosphorylation of thiamine to thiamine pyrophosphate (TPP). TPP is an active cofactor for enzymes involved in glycolysis and energy production. Plant leaves require high levels of TPP for photosynthesis and carbohydrate metabolism. This chain is Thiamine pyrophosphokinase 3 (TPK3), found in Oryza sativa subsp. japonica (Rice).